The primary structure comprises 406 residues: CMP-sialic acid transporter 2 (406 aa).

At 1–41 the chain is on the cytoplasmic side; sequence MKNGMAECSVCRSRLVSPSSKAISRAYDNYNYKIRVSSKQR. The chain crosses the membrane as a helical span at residues 42-62; that stretch reads ALNVFLVVGDCMLVGLQPVLV. Topologically, residues 63–75 are lumenal; that stretch reads YMSKVDGKFNFSP. The helical transmembrane segment at 76-96 threads the bilayer; sequence ISVNFLTEIAKVIFAMVMLLF. Topologically, residues 97 to 148 are cytoplasmic; that stretch reads QARHQKVGEKPLLSLSTFVQAARNNMLLAVPAGLYAINNYLKFTMQLYFNPA. A helical transmembrane segment spans residues 149–169; sequence TVKMLSNLKVLVIAVLLKMIM. Topologically, residues 170–172 are lumenal; the sequence is KRR. The chain crosses the membrane as a helical span at residues 173 to 193; it reads FSIIQWEALALLLIGISINQL. Over 194-201 the chain is Cytoplasmic; the sequence is RSLPEGAT. Residues 202-222 form a helical membrane-spanning segment; that stretch reads TVAVPIATGAYICTFIFVTVP. The Lumenal segment spans residues 223–245; the sequence is SLASVYNEYALKSQYDTSIYLQN. A helical membrane pass occupies residues 246 to 266; it reads LFLYGYGAIFNFLGILGTVIY. Residues 267 to 282 lie on the Cytoplasmic side of the membrane; the sequence is KGPGSFDILQGHSRAT. The chain crosses the membrane as a helical span at residues 283–303; it reads MFLILNNAAQGILSSFFFKYA. The Lumenal portion of the chain corresponds to 304–323; the sequence is DTILKKYSSTVATIFTGIAS. The chain crosses the membrane as a helical span at residues 324-344; it reads AALFGHILTMNFLLGISIVFI. Residues 345–406 are Cytoplasmic-facing; that stretch reads SMHQFFSPLS…SDDRVPLLPR (62 aa).

The protein belongs to the nucleotide-sugar transporter family. CMP-Sialate:CMP antiporter (TC 2.A.7.12) subfamily.

Its subcellular location is the golgi apparatus membrane. Sugar transporter involved in the transport of CMP-sialic acid from the cytoplasm into the Golgi. The chain is CMP-sialic acid transporter 2 from Arabidopsis thaliana (Mouse-ear cress).